The sequence spans 310 residues: Syndecan-1 (310 aa).

The N-terminal stretch at 1 to 22 (MRRAALWLWLCALALSLQPALP) is a signal peptide. The Extracellular portion of the chain corresponds to 23 to 254 (QIVATNLPPE…GLLDRKEVLG (232 aa)). Disordered regions lie at residues 27-100 (TNLP…EGPK) and 114-212 (LTAR…QDFT). Positions 32 to 42 (EDQDGSGDDSD) are enriched in acidic residues. The O-linked (Xyl...) (chondroitin sulfate) serine glycan is linked to serine 37. Asparagine 43 carries N-linked (GlcNAc...) asparagine glycosylation. Serine 45 and serine 47 each carry an O-linked (Xyl...) (heparan sulfate) serine glycan. Polar residues predominate over residues 55–75 (ITLSQQTPSTWKDTQLLTAIP). Residues 117-127 (REQEATPRPRE) are compositionally biased toward basic and acidic residues. Residues 128–151 (TTQLPTTHLASTTTATTAQEPATS) show a composition bias toward low complexity. Positions 153 to 164 (PHRDMQPGHHET) are enriched in basic and acidic residues. Serine 206 and serine 216 each carry an O-linked (Xyl...) (chondroitin sulfate) serine glycan. The chain crosses the membrane as a helical span at residues 255 to 275 (GVIAGGLVGLIFAVCLVGFML). Topologically, residues 276–310 (YRMKKKDEGSYSLEEPKQANGGAYQKPTKQEEFYA) are cytoplasmic. A disordered region spans residues 284-310 (GSYSLEEPKQANGGAYQKPTKQEEFYA). A Phosphoserine modification is found at serine 285.

This sequence belongs to the syndecan proteoglycan family. Interacts with CDCP1. Interacts (via C-terminus) with TIAM1 (via PDZ domain). Interacts with MDK. Post-translationally, shedding is enhanced by a number of factors such as heparanase, thrombin or EGF. Also by stress and wound healing. PMA-mediated shedding is inhibited by TIMP3. Detected in placenta (at protein level). Detected in fibroblasts (at protein level).

It localises to the membrane. The protein resides in the secreted. The protein localises to the extracellular exosome. Cell surface proteoglycan that contains both heparan sulfate and chondroitin sulfate and that links the cytoskeleton to the interstitial matrix. Regulates exosome biogenesis in concert with SDCBP and PDCD6IP. Able to induce its own expression in dental mesenchymal cells and also in the neighboring dental epithelial cells via an MSX1-mediated pathway. This chain is Syndecan-1, found in Homo sapiens (Human).